The following is a 107-amino-acid chain: Anti-adapter protein IraM (107 aa).

Belongs to the IraM/RssC family.

It is found in the cytoplasm. Functionally, inhibits RpoS proteolysis by regulating RssB activity, thereby increasing the stability of the sigma stress factor RpoS during magnesium starvation. This chain is Anti-adapter protein IraM, found in Shigella sonnei (strain Ss046).